The following is a 181-amino-acid chain: NADH-quinone oxidoreductase subunit I (181 aa).

4Fe-4S ferredoxin-type domains are found at residues 44 to 74 (LNRY…VEGA) and 90 to 119 (RVYQ…MTND). Positions 54, 57, 60, 64, 99, 102, 105, and 109 each coordinate [4Fe-4S] cluster.

The protein belongs to the complex I 23 kDa subunit family. In terms of assembly, NDH-1 is composed of 14 different subunits. Subunits NuoA, H, J, K, L, M, N constitute the membrane sector of the complex. [4Fe-4S] cluster is required as a cofactor.

It localises to the cell membrane. The enzyme catalyses a quinone + NADH + 5 H(+)(in) = a quinol + NAD(+) + 4 H(+)(out). In terms of biological role, NDH-1 shuttles electrons from NADH, via FMN and iron-sulfur (Fe-S) centers, to quinones in the respiratory chain. The immediate electron acceptor for the enzyme in this species is believed to be menaquinone. Couples the redox reaction to proton translocation (for every two electrons transferred, four hydrogen ions are translocated across the cytoplasmic membrane), and thus conserves the redox energy in a proton gradient. The polypeptide is NADH-quinone oxidoreductase subunit I (Mycobacterium marinum (strain ATCC BAA-535 / M)).